A 487-amino-acid chain; its full sequence is Histamine H1 receptor (487 aa).

The Extracellular portion of the chain corresponds to M1–P29. Residues N5 and N18 are each glycosylated (N-linked (GlcNAc...) asparagine). Residues L30 to Y50 traverse the membrane as a helical segment. The Cytoplasmic portion of the chain corresponds to A51 to L64. Residues Y65–L89 traverse the membrane as a helical segment. The Extracellular portion of the chain corresponds to M90–R97. The chain crosses the membrane as a helical span at residues P98 to I123. An intrachain disulfide couples C100 to C180. D107 and T112 together coordinate histamine. The tract at residues D107–T112 is important for agonist binding. The Cytoplasmic segment spans residues D124–A144. Residues T140 and T142 each carry the phosphothreonine modification. Residues S145–G164 traverse the membrane as a helical segment. At W165–T188 the chain is on the extracellular side. The chain crosses the membrane as a helical span at residues W189–A211. A histamine-binding site is contributed by N198. At K212–Q416 the chain is on the cytoplasmic side. Phosphoserine is present on S230. The segment covering K238–K261 has biased composition (basic and acidic residues). Residues K238–E292 are disordered. T279 is modified (phosphothreonine). Phosphoserine is present on residues S344 and S347. A disordered region spans residues E345–R377. Over residues G353–A370 the composition is skewed to polar residues. 3 positions are modified to phosphoserine: S380, S396, and S398. Residues L417 to F440 traverse the membrane as a helical segment. The tract at residues F424–W428 is important for agonist binding. Y431 is a binding site for histamine. Residues C441 and C444 are joined by a disulfide bond. Residues C441 to N446 are Extracellular-facing. The helical transmembrane segment at E447–P469 threads the bilayer. Over L470–S487 the chain is Cytoplasmic.

The protein belongs to the G-protein coupled receptor 1 family. Phosphorylation at sites in the second and third cytoplasmic loops independently contribute to agonist-induced receptor down-regulation.

It localises to the cell membrane. Its function is as follows. G-protein-coupled receptor for histamine, a biogenic amine that functions as an immune modulator and a neurotransmitter. Through the H1 receptor, histamine mediates the contraction of smooth muscles and increases capillary permeability due to contraction of terminal venules. Also mediates neurotransmission in the central nervous system and thereby regulates circadian rhythms, emotional and locomotor activities as well as cognitive functions. The protein is Histamine H1 receptor of Gorilla gorilla gorilla (Western lowland gorilla).